The following is a 62-amino-acid chain: Sperm protamine P1 (62 aa).

The interval 1–62 (MARYRHSRSR…RYSRRGRRRY (62 aa)) is disordered.

Belongs to the protamine P1 family. As to expression, testis.

The protein resides in the nucleus. The protein localises to the chromosome. In terms of biological role, protamines substitute for histones in the chromatin of sperm during the haploid phase of spermatogenesis. They compact sperm DNA into a highly condensed, stable and inactive complex. The protein is Sperm protamine P1 (PRM1) of Trichosurus vulpecula (Brush-tailed possum).